The sequence spans 438 residues: GTPase Der (438 aa).

2 consecutive EngA-type G domains span residues 4 to 168 (PIVA…PEGN) and 177 to 352 (IRIA…GNYC). Residues 10–17 (GRPNVGKS), 57–61 (DTGGI), 120–123 (NKID), 183–190 (GRPNVGKS), 230–234 (DTAGL), and 295–298 (NKWD) contribute to the GTP site. The region spanning 353 to 437 (KRIKTGILND…GIKLEFRERK (85 aa)) is the KH-like domain.

It belongs to the TRAFAC class TrmE-Era-EngA-EngB-Septin-like GTPase superfamily. EngA (Der) GTPase family. Associates with the 50S ribosomal subunit.

GTPase that plays an essential role in the late steps of ribosome biogenesis. This is GTPase Der from Clostridium novyi (strain NT).